The sequence spans 143 residues: Probable cyclic pyranopterin monophosphate synthase (143 aa).

Residues 61-63 (YCH) and 97-98 (ME) contribute to the substrate site. Asp-112 is a catalytic residue.

Belongs to the MoaC family. In terms of assembly, homohexamer; trimer of dimers.

It catalyses the reaction (8S)-3',8-cyclo-7,8-dihydroguanosine 5'-triphosphate = cyclic pyranopterin phosphate + diphosphate. It functions in the pathway cofactor biosynthesis; molybdopterin biosynthesis. Its function is as follows. Catalyzes the conversion of (8S)-3',8-cyclo-7,8-dihydroguanosine 5'-triphosphate to cyclic pyranopterin monophosphate (cPMP). This chain is Probable cyclic pyranopterin monophosphate synthase, found in Thermoplasma acidophilum (strain ATCC 25905 / DSM 1728 / JCM 9062 / NBRC 15155 / AMRC-C165).